The sequence spans 140 residues: Small ribosomal subunit protein uS19 (140 aa).

Belongs to the universal ribosomal protein uS19 family.

Protein S19 forms a complex with S13 that binds strongly to the 16S ribosomal RNA. This is Small ribosomal subunit protein uS19 from Metallosphaera sedula (strain ATCC 51363 / DSM 5348 / JCM 9185 / NBRC 15509 / TH2).